Here is a 257-residue protein sequence, read N- to C-terminus: GTP cyclohydrolase 1 type 2 homolog (257 aa).

Histidine 65, aspartate 103, histidine 221, and glutamate 224 together coordinate a divalent metal cation.

This sequence belongs to the GTP cyclohydrolase I type 2/NIF3 family. As to quaternary structure, homohexamer.

The polypeptide is GTP cyclohydrolase 1 type 2 homolog (ykiD) (Lactococcus lactis subsp. lactis (strain IL1403) (Streptococcus lactis)).